We begin with the raw amino-acid sequence, 465 residues long: Probable citrate synthase, mitochondrial (465 aa).

Catalysis depends on residues H303, H349, and D404.

It belongs to the citrate synthase family. In terms of assembly, homodimer.

The protein localises to the mitochondrion matrix. It catalyses the reaction oxaloacetate + acetyl-CoA + H2O = citrate + CoA + H(+). The protein operates within carbohydrate metabolism; tricarboxylic acid cycle; isocitrate from oxaloacetate: step 1/2. The protein is Probable citrate synthase, mitochondrial of Glossina morsitans morsitans (Savannah tsetse fly).